A 260-amino-acid polypeptide reads, in one-letter code: 23S rRNA (guanosine-2'-O-)-methyltransferase RlmB (260 aa).

3 residues coordinate S-adenosyl-L-methionine: Gly197, Ile217, and Leu226.

Belongs to the class IV-like SAM-binding methyltransferase superfamily. RNA methyltransferase TrmH family. RlmB subfamily.

It is found in the cytoplasm. It catalyses the reaction guanosine(2251) in 23S rRNA + S-adenosyl-L-methionine = 2'-O-methylguanosine(2251) in 23S rRNA + S-adenosyl-L-homocysteine + H(+). Its function is as follows. Specifically methylates the ribose of guanosine 2251 in 23S rRNA. The sequence is that of 23S rRNA (guanosine-2'-O-)-methyltransferase RlmB from Nitrosomonas europaea (strain ATCC 19718 / CIP 103999 / KCTC 2705 / NBRC 14298).